Consider the following 575-residue polypeptide: Muellerian-inhibiting factor (575 aa).

A signal peptide spans 1 to 20 (MQGPSLSQLVLVLMGALLEA). Residues 21–466 (GTPREEVSST…ERSGPARAQR (446 aa)) constitute a propeptide that is removed on maturation. N-linked (GlcNAc...) asparagine glycosylation is found at Asn78 and Asn343. 3 cysteine pairs are disulfide-bonded: Cys477–Cys541, Cys503–Cys572, and Cys507–Cys574.

Belongs to the TGF-beta family. Homodimer; disulfide-linked. In terms of processing, preproprotein is proteolytically processed to generate N- and C-terminal cleavage products that homodimerize and associate to form a biologically active non-covalent complex. Binding of the non-covalent complex to AMHR2 induces dissociation of the pro-region from the mature C-terminal dimer. The N-terminal portion of the protein, despite having no intrinsic activity, has the role of amplifying the activity of the C-terminus. As to expression, detected in fetal Sertoli cells. Expressed in granulosa cells of growing follicles but also in theca cells of preovulatory follicles and corpora lutea (at protein level).

The protein localises to the secreted. Plays an important role in several reproductive functions. Induces Muellerian duct regression during male fetal sexual differentiation and plays a role in Leydig cell differentiation and function. In female acts as a negative regulator of the primordial to primary follicle transition and decreases FSH sensitivity of growing follicles. AMH signals by binding to a specific type-II receptor, AMHR2, that heterodimerizes with type-I receptors (ACVR1 and BMPR1A), and recruiting SMAD proteins that are translocated to the nucleus to regulate target gene expression. This Sus scrofa (Pig) protein is Muellerian-inhibiting factor (AMH).